The chain runs to 494 residues: Cytochrome P450 2C44 (494 aa).

Residues 1–25 form the signal peptide; it reads MELLGLPTLALLVLVMSLSLLSVWT. A Phosphoserine modification is found at S131. An N6-acetyllysine mark is found at K253 and K379. C439 provides a ligand contact to heme.

Belongs to the cytochrome P450 family. The cofactor is heme. In terms of tissue distribution, highly expressed in liver, particularly in hepatocytes and bile duct epithelial cells (at protein level). Expressed in nephron segments. Prominent expression is detected in proximal tubules at the corticomedullary junction (at protein level). Also expressed in renal cortical collecting duct. Lower expression levels are detected in adrenal glands.

Its subcellular location is the endoplasmic reticulum membrane. The protein resides in the microsome membrane. It carries out the reaction (5Z,8Z,11Z,14Z)-eicosatetraenoate + reduced [NADPH--hemoprotein reductase] + O2 = (8R,9S)-epoxy-(5Z,11Z,14Z)-eicosatrienoate + oxidized [NADPH--hemoprotein reductase] + H2O + H(+). The enzyme catalyses (5Z,8Z,11Z,14Z)-eicosatetraenoate + reduced [NADPH--hemoprotein reductase] + O2 = (11R,12S)-epoxy-(5Z,8Z,14Z)-eicosatrienoate + oxidized [NADPH--hemoprotein reductase] + H2O + H(+). The catalysed reaction is (5Z,8Z,11Z,14Z)-eicosatetraenoate + reduced [NADPH--hemoprotein reductase] + O2 = 14,15-epoxy-(5Z,8Z,11Z)-eicosatrienoate + oxidized [NADPH--hemoprotein reductase] + H2O + H(+). It catalyses the reaction (5Z,8Z,11Z,14Z,17Z)-eicosapentaenoate + reduced [NADPH--hemoprotein reductase] + O2 = 8,9-epoxy-(5Z,11Z,14Z,17Z)-eicosatetraenoate + oxidized [NADPH--hemoprotein reductase] + H2O + H(+). It carries out the reaction (5Z,8Z,11Z,14Z,17Z)-eicosapentaenoate + reduced [NADPH--hemoprotein reductase] + O2 = 11,12-epoxy-(5Z,8Z,14Z,17Z)-eicosatetraenoate + oxidized [NADPH--hemoprotein reductase] + H2O + H(+). The enzyme catalyses (5Z,8Z,11Z,14Z,17Z)-eicosapentaenoate + reduced [NADPH--hemoprotein reductase] + O2 = 14,15-epoxy-(5Z,8Z,11Z,17Z)-eicosatetraenoate + oxidized [NADPH--hemoprotein reductase] + H2O + H(+). The catalysed reaction is (5Z,8Z,11Z,14Z,17Z)-eicosapentaenoate + reduced [NADPH--hemoprotein reductase] + O2 = (17R,18S)-epoxy-(5Z,8Z,11Z,14Z)-eicosatetraenoate + oxidized [NADPH--hemoprotein reductase] + H2O + H(+). It catalyses the reaction (5Z,8Z,11Z,14Z,17Z)-eicosapentaenoate + reduced [NADPH--hemoprotein reductase] + O2 = (17S,18R)-epoxy-(5Z,8Z,11Z,14Z)-eicosatetraenoate + oxidized [NADPH--hemoprotein reductase] + H2O + H(+). It carries out the reaction 20-hydroxy-(5Z,8Z,11Z,14Z)-eicosatetraenoate + reduced [NADPH--hemoprotein reductase] + O2 = 20-hydroxy-8,9-epoxy-(5Z,11Z,14Z)-eicosatrienoate + oxidized [NADPH--hemoprotein reductase] + H2O + H(+). It functions in the pathway lipid metabolism; arachidonate metabolism. In terms of biological role, a cytochrome P450 monooxygenase involved in polyunsaturated fatty acids (PUFAs) metabolism and signaling. Catalyzes preferentially the epoxidation of double bonds of PUFAs. Converts arachidonic acid (ARA, C20:4(n-6)) primarily to stereospecific products 8R,9S-epoxyeicosatrienoate (EET) and 11R,12S-EET. Plays a major role in the formation of EETs and hydroxy-EETs (HEETs) in kidney. Via EETs may inhibit the epithelial sodium channels (ENaCs) in nephron segments, preventing excessive sodium absorption during high dietary salt intake. Participates in the formation of anti-inflammatory hydroxyepoxyeicosatrienoic acids (HEETs) by converting 20-hydroxyeicosatetraenoic acid (20-HETE) to 20,8,9-HEET, an activator of PPARA. Metabolizes eicosapentaenoic acid (EPA, C20:5(n-3)) to epoxyeicosatetraenoic acid (EETeTr) regioisomers, 8,9-, 11,12-, 14,15-, and 17,18- EETeTr, preferentially producing 17R,18S enantiomer. Mechanistically, uses molecular oxygen inserting one oxygen atom into a substrate, and reducing the second into a water molecule, with two electrons provided by NADPH via cytochrome P450 reductase (CPR; NADPH-ferrihemoprotein reductase). In Mus musculus (Mouse), this protein is Cytochrome P450 2C44.